The sequence spans 339 residues: D-erythrose-4-phosphate dehydrogenase (339 aa).

NAD(+) contacts are provided by residues Arg-12–Ile-13 and Arg-81. Residues Ser-154 to Thr-156, Arg-200, Thr-213 to Arg-214, and Arg-236 contribute to the substrate site. Residue Cys-155 is the Nucleophile of the active site. An NAD(+)-binding site is contributed by Asn-318.

Belongs to the glyceraldehyde-3-phosphate dehydrogenase family. Epd subfamily. As to quaternary structure, homotetramer.

The protein localises to the cytoplasm. The catalysed reaction is D-erythrose 4-phosphate + NAD(+) + H2O = 4-phospho-D-erythronate + NADH + 2 H(+). It participates in cofactor biosynthesis; pyridoxine 5'-phosphate biosynthesis; pyridoxine 5'-phosphate from D-erythrose 4-phosphate: step 1/5. Functionally, catalyzes the NAD-dependent conversion of D-erythrose 4-phosphate to 4-phosphoerythronate. The chain is D-erythrose-4-phosphate dehydrogenase from Cronobacter sakazakii (strain ATCC BAA-894) (Enterobacter sakazakii).